Consider the following 583-residue polypeptide: L-arabonate dehydratase (583 aa).

[4Fe-4S] cluster is bound by residues Cys56, Cys124, and Cys197.

The protein belongs to the IlvD/Edd family. As to quaternary structure, homodimer. [4Fe-4S] cluster is required as a cofactor.

The catalysed reaction is L-arabinonate = 2-dehydro-3-deoxy-L-arabinonate + H2O. Activity is enhanced by Mg(2+), being optimal with a concentration of 1-10 mM Mg(2+). Its function is as follows. Catalyzes the dehydration of L-arabonate to L-2-keto-3-deoxyarabonate (L-KDA). Is involved in a degradation pathway of L-arabinose that allows A.brasilense to grow on L-arabinose as a sole carbon source. To a lesser extent, can also use D-xylonate as substrate, but not D-galactonate, D-arabonate, and D-gluconate. This Azospirillum brasilense protein is L-arabonate dehydratase (araC).